The sequence spans 223 residues: Transmembrane protein 114 (223 aa).

A helical membrane pass occupies residues 7-27 (GLAGAAALTGALSFVLLAAAI). Asn-55 and Asn-89 each carry an N-linked (GlcNAc...) asparagine glycan. Helical transmembrane passes span 106–126 (FVIL…TGFL), 134–154 (LLLL…LAGI), and 189–209 (LALG…FLAA).

It belongs to the PMP-22/EMP/MP20 family.

It localises to the cell junction. It is found in the tight junction. The protein localises to the lateral cell membrane. Its subcellular location is the apical cell membrane. In Homo sapiens (Human), this protein is Transmembrane protein 114.